A 185-amino-acid chain; its full sequence is MISSFRAQCAARVVREGGVIAYPTEAVWGLGCDPWNEDAVYRLLALKARPVEKGLIVVAANIHQLDFLLEDLPDVWLDRLAGTWPGPNTWLVPHQERLPEWVTGVHDSVAVRVTDHPLVQELCHLTGPLISTSANPAGRPAARTRLRVEQYFHDELDAILGGALGGRRNPSLIRDLVTGQVIRPA.

The YrdC-like domain maps to 4 to 185; that stretch reads SFRAQCAARV…LVTGQVIRPA (182 aa).

This sequence belongs to the SUA5 family. TsaC subfamily.

It is found in the cytoplasm. It catalyses the reaction L-threonine + hydrogencarbonate + ATP = L-threonylcarbamoyladenylate + diphosphate + H2O. In terms of biological role, required for the formation of a threonylcarbamoyl group on adenosine at position 37 (t(6)A37) in tRNAs that read codons beginning with adenine. Catalyzes the conversion of L-threonine, HCO(3)(-)/CO(2) and ATP to give threonylcarbamoyl-AMP (TC-AMP) as the acyladenylate intermediate, with the release of diphosphate. The chain is Threonylcarbamoyl-AMP synthase from Pseudomonas aeruginosa (strain UCBPP-PA14).